We begin with the raw amino-acid sequence, 169 residues long: Disulfide bond formation protein B 1 (169 aa).

Residues 1–14 (MSDDRLGLGRERRF) are Cytoplasmic-facing. Residues 15 to 31 (LVLLGIICLALIGGALY) form a helical membrane-spanning segment. Residues 32 to 49 (MQVVLGEAPCPLCILQRY) are Periplasmic-facing. A disulfide bond links C41 and C44. A helical membrane pass occupies residues 50-64 (ALLLIALFAFIGAAM). Over 65–71 (SSRRGVT) the chain is Cytoplasmic. A helical transmembrane segment spans residues 72 to 89 (VMETLVVICALAGAGVAG). Residues 90 to 144 (HHVYTQFYPSVSCGIDVLQPIVDSLPLAKIFPLGFQVDGFCSTPYPPILGLSLAQ) are Periplasmic-facing. C102 and C130 are joined by a disulfide. The chain crosses the membrane as a helical span at residues 145 to 163 (WALVAFVLTVILVPLGVVR). Residues 164–169 (NRKKTY) lie on the Cytoplasmic side of the membrane.

The protein belongs to the DsbB family.

It is found in the cell inner membrane. In terms of biological role, required for disulfide bond formation in some periplasmic proteins. Acts by oxidizing the DsbA protein. The protein is Disulfide bond formation protein B 1 of Pseudomonas fluorescens (strain ATCC BAA-477 / NRRL B-23932 / Pf-5).